Consider the following 211-residue polypeptide: Mediator of RNA polymerase II transcription subunit 20 (211 aa).

This sequence belongs to the Mediator complex subunit 20 family. In terms of assembly, component of the Mediator complex.

The protein localises to the nucleus. Component of the Mediator complex, a coactivator involved in the regulated transcription of nearly all RNA polymerase II-dependent genes. Mediator functions as a bridge to convey information from gene-specific regulatory proteins to the basal RNA polymerase II transcription machinery. Mediator is recruited to promoters by direct interactions with regulatory proteins and serves as a scaffold for the assembly of a functional preinitiation complex with RNA polymerase II and the general transcription factors. This chain is Mediator of RNA polymerase II transcription subunit 20 (MED20), found in Gallus gallus (Chicken).